Reading from the N-terminus, the 251-residue chain is Triosephosphate isomerase (251 aa).

Residue 9-11 (NWK) participates in substrate binding. Catalysis depends on histidine 95, which acts as the Electrophile. Glutamate 167 (proton acceptor) is an active-site residue. Residues glycine 173, serine 213, and 234–235 (GG) each bind substrate.

It belongs to the triosephosphate isomerase family. In terms of assembly, homodimer.

Its subcellular location is the cytoplasm. It carries out the reaction D-glyceraldehyde 3-phosphate = dihydroxyacetone phosphate. The protein operates within carbohydrate biosynthesis; gluconeogenesis. Its pathway is carbohydrate degradation; glycolysis; D-glyceraldehyde 3-phosphate from glycerone phosphate: step 1/1. Functionally, involved in the gluconeogenesis. Catalyzes stereospecifically the conversion of dihydroxyacetone phosphate (DHAP) to D-glyceraldehyde-3-phosphate (G3P). This is Triosephosphate isomerase from Geotalea uraniireducens (strain Rf4) (Geobacter uraniireducens).